We begin with the raw amino-acid sequence, 341 residues long: Glucokinase (341 aa).

7–12 (GDIGGT) contributes to the ATP binding site.

It belongs to the bacterial glucokinase family.

It is found in the cytoplasm. The enzyme catalyses D-glucose + ATP = D-glucose 6-phosphate + ADP + H(+). This Nostoc punctiforme (strain ATCC 29133 / PCC 73102) protein is Glucokinase.